The chain runs to 153 residues: Small ribosomal subunit protein uS5 (153 aa).

The S5 DRBM domain maps to 15–78; the sequence is FQEVVVNVGR…DDAFKNLIHV (64 aa).

The protein belongs to the universal ribosomal protein uS5 family. Part of the 30S ribosomal subunit. Contacts proteins S4 and S8.

In terms of biological role, with S4 and S12 plays an important role in translational accuracy. Its function is as follows. Located at the back of the 30S subunit body where it stabilizes the conformation of the head with respect to the body. This Helicobacter acinonychis (strain Sheeba) protein is Small ribosomal subunit protein uS5.